The following is a 193-amino-acid chain: Orotate phosphoribosyltransferase (193 aa).

5-phospho-alpha-D-ribose 1-diphosphate is bound by residues Arg-107, Lys-108, Lys-111, His-113, and 133–141 (EDVITSGGS). Thr-137 and Arg-165 together coordinate orotate.

It belongs to the purine/pyrimidine phosphoribosyltransferase family. PyrE subfamily. As to quaternary structure, homodimer. Mg(2+) serves as cofactor.

It carries out the reaction orotidine 5'-phosphate + diphosphate = orotate + 5-phospho-alpha-D-ribose 1-diphosphate. The protein operates within pyrimidine metabolism; UMP biosynthesis via de novo pathway; UMP from orotate: step 1/2. In terms of biological role, catalyzes the transfer of a ribosyl phosphate group from 5-phosphoribose 1-diphosphate to orotate, leading to the formation of orotidine monophosphate (OMP). The chain is Orotate phosphoribosyltransferase from Rhodopirellula baltica (strain DSM 10527 / NCIMB 13988 / SH1).